Here is a 98-residue protein sequence, read N- to C-terminus: MKGQDVTLKNVAVELEDVVSPIILDCEEEIETEEVDCPAPYAVEAVCYVCENPLRLALVSSPDGIHQLHQLLLDCISLLCANCSREVYSNRRPQRNGP.

Residues 1–37 (MKGQDVTLKNVAVELEDVVSPIILDCEEEIETEEVDC) are E7 terminal domain. An LXCXE motif; interaction with host RB1 and TMEM173/STING motif is present at residues 24-28 (LDCEE). A zinc finger spans residues 47 to 83 (CYVCENPLRLALVSSPDGIHQLHQLLLDCISLLCANC). The Nuclear export signal signature appears at 65–73 (IHQLHQLLL).

The protein belongs to the papillomaviridae E7 protein family. As to quaternary structure, homodimer. Homooligomer. Interacts with host RB1; this interaction induces dissociation of RB1-E2F1 complex thereby disrupting RB1 activity. Interacts with host EP300; this interaction represses EP300 transcriptional activity. Interacts with protein E2; this interaction inhibits E7 oncogenic activity. Interacts with host TMEM173/STING; this interaction impairs the ability of TMEM173/STING to sense cytosolic DNA and promote the production of type I interferon (IFN-alpha and IFN-beta). Post-translationally, highly phosphorylated.

The protein resides in the host cytoplasm. It localises to the host nucleus. Its function is as follows. Plays a role in viral genome replication by driving entry of quiescent cells into the cell cycle. Stimulation of progression from G1 to S phase allows the virus to efficiently use the cellular DNA replicating machinery to achieve viral genome replication. E7 protein has both transforming and trans-activating activities. Induces the disassembly of the E2F1 transcription factor from RB1, with subsequent transcriptional activation of E2F1-regulated S-phase genes. Interferes with host histone deacetylation mediated by HDAC1 and HDAC2, leading to transcription activation. Also plays a role in the inhibition of both antiviral and antiproliferative functions of host interferon alpha. Interaction with host TMEM173/STING impairs the ability of TMEM173/STING to sense cytosolic DNA and promote the production of type I interferon (IFN-alpha and IFN-beta). This is Protein E7 from Bovine papillomavirus type 3.